The chain runs to 651 residues: Transcription termination factor FttA (651 aa).

An archaeal CPSF-KH domain region spans residues 1 to 200 (MTFLIKRETQ…ITGLGGFREV (200 aa)). The segment at 12–79 (DQILRDIRAV…ISVRPDPEVL (68 aa)) is KHa. Residues 80–147 (LPPEEAEKLI…WAPKVVRTPP (68 aa)) form a KHb region. Positions 188-398 (WIRITGLGGF…LVMESTYGGA (211 aa)) are metallo-beta-lactamase N-terminus. Residues histidine 256, histidine 258, aspartate 260, histidine 261, histidine 344, and aspartate 367 each contribute to the Zn(2+) site. The segment at 399–592 (NDIQMPREEA…MEVHTIDGFS (194 aa)) is beta-Casp. The metallo-beta-lactamase C-terminus stretch occupies residues 593–651 (GHADRRELMNYVAKVRPRPERIITVHGEPQKCLDLATSIHRKFGISTRAPNNLDTIRLR). Histidine 618 provides a ligand contact to Zn(2+).

This sequence belongs to the metallo-beta-lactamase superfamily. RNA-metabolizing metallo-beta-lactamase-like family. FttA subfamily. In terms of assembly, homodimer. Interacts with RNA polymerase (RNAP), interacts with the Spt4-Spt5 complex. Zn(2+) is required as a cofactor.

Functionally, terminates transcription on the whole genome. Termination is linked to FttA-mediated RNA cleavage and does not require NTP hydrolysis. Cleaves endonucleolytically at the RNA exit channel of RNA polymerase (RNAP); the 5'-3' exonuclease activity of this protein degrades the nascent RNA released from RNAP. In terms of biological role, has nuclease activity on single-stranded RNA. The polypeptide is Transcription termination factor FttA (Pyrococcus horikoshii (strain ATCC 700860 / DSM 12428 / JCM 9974 / NBRC 100139 / OT-3)).